Reading from the N-terminus, the 617-residue chain is Prothrombin (617 aa).

The first 24 residues, 1-24 (MLHVRGLGLPGCLALAALASLVHS), serve as a signal peptide directing secretion. A propeptide spanning residues 25-43 (QHVFLAPQQALSLLQRVRR) is cleaved from the precursor. Positions 44–90 (ANSGFLEELRKGNLERECVEEQCSYEEAFEALESPQDTDVFWAKYTV) constitute a Gla domain. 4-carboxyglutamate is present on residues Glu50, Glu51, Glu58, Glu60, Glu63, Glu64, Glu69, Glu70, Glu73, and Glu76. Cys61 and Cys66 are joined by a disulfide. 10 cysteine pairs are disulfide-bonded: Cys91-Cys104, Cys109-Cys187, Cys130-Cys170, Cys158-Cys182, Cys215-Cys292, Cys236-Cys276, Cys264-Cys287, Cys332-Cys478, Cys387-Cys403, and Cys532-Cys546. 2 Kringle domains span residues 109 to 187 (CAMD…IPVC) and 215 to 292 (CLLE…LNYC). N-linked (GlcNAc...) asparagine glycosylation is found at Asn120 and Asn144. In terms of domain architecture, Peptidase S1 spans 360 to 614 (IVEGWDAEKG…LKRWMQKVID (255 aa)). The Charge relay system role is filled by His402. An N-linked (GlcNAc...) asparagine glycan is attached at Asn412. Asp458 acts as the Charge relay system in catalysis. Positions 547–569 (AGFKVNDTKRGDACEGDSGGPFV) are high affinity receptor-binding region which is also known as the TP508 peptide. Asn552 is a glycosylation site (N-linked (GlcNAc...) asparagine). A disulfide bridge connects residues Cys560 and Cys590. Ser564 serves as the catalytic Charge relay system.

This sequence belongs to the peptidase S1 family. As to quaternary structure, heterodimer (named alpha-thrombin) of a light and a heavy chain; disulfide-linked. Forms a heterodimer with SERPINA5. In plasma, interacts (via N-terminus) with alpha-1-microglobulin; this interaction does not prevent the activation of prothrombin to thrombin. In terms of processing, the gamma-carboxyglutamyl residues, which bind calcium ions, result from the carboxylation of glutamyl residues by a microsomal enzyme, the vitamin K-dependent carboxylase. The modified residues are necessary for the calcium-dependent interaction with a negatively charged phospholipid surface, which is essential for the conversion of prothrombin to thrombin. Post-translationally, in the penultimate step of the coagulation cascade, prothrombin is converted to thrombin by the prothrombinase complex composed of factor Xa (F10), cofactor Va (F5), and phospholipids. This activation requires factor Xa-catalyzed sequential cleavage at 2 sites, Arg-310 and Arg-359, along 2 possible pathways. In the first pathway, the first cleavage occurs at Arg-310, leading to the formation of the inactive intermediate prethrombin-2. This pathway preferentially occurs on platelets and in the absence of cofactor Va. In the second pathway, the first cleavage occurs at Arg-359, which separates protease domain into 2 chains that remain connected through a disulfide bond and generates the active intermediate meizothrombin. The presence of cofactor Va directs activation along the meizothrombin pathway and greatly accelerates the rate of cleavage at Arg-359, but has a smaller effect on the cleavage of meizothrombin at Arg-310. Meizothrombin accumulates as an intermediate when prothrombinase is assembled on the membrane of red blood cells.

The catalysed reaction is Selective cleavage of Arg-|-Gly bonds in fibrinogen to form fibrin and release fibrinopeptides A and B.. Its activity is regulated as follows. Activity is promoted in the presence of negatively charged surfaces, such as polyphosphate and dextran sulfate. Inhibited by SERPINA5. Functionally, thrombin, which cleaves bonds after Arg and Lys, converts fibrinogen to fibrin and activates factors V, VII, VIII, XIII, and, in complex with thrombomodulin, protein C. Functions in blood homeostasis, inflammation and wound healing. Activates coagulation factor XI (F11); activation is promoted by the contact with negatively charged surfaces. Triggers the production of pro-inflammatory cytokines, such as MCP-1/CCL2 and IL8/CXCL8, in endothelial cells. This is Prothrombin (F2) from Rattus norvegicus (Rat).